Consider the following 223-residue polypeptide: 23 kDa piroplasm membrane protein (223 aa).

The N-terminal stretch at 1–19 (MHKFTKVFFVAILVHTLKS) is a signal peptide. Residues 20 to 197 (GLVFTPVSGT…EEEKSDKKKY (178 aa)) are Extracellular-facing. The N-linked (GlcNAc...) asparagine glycan is linked to N69. The chain crosses the membrane as a helical span at residues 198 to 218 (VLMVVVVVVFVVVASLVVFLV). Residues 219-223 (KFCLK) lie on the Cytoplasmic side of the membrane.

The protein resides in the membrane. This is 23 kDa piroplasm membrane protein from Theileria buffeli.